A 345-amino-acid chain; its full sequence is Phosphate acyltransferase (345 aa).

This sequence belongs to the PlsX family. As to quaternary structure, homodimer. Probably interacts with PlsY.

Its subcellular location is the cytoplasm. The catalysed reaction is a fatty acyl-[ACP] + phosphate = an acyl phosphate + holo-[ACP]. The protein operates within lipid metabolism; phospholipid metabolism. In terms of biological role, catalyzes the reversible formation of acyl-phosphate (acyl-PO(4)) from acyl-[acyl-carrier-protein] (acyl-ACP). This enzyme utilizes acyl-ACP as fatty acyl donor, but not acyl-CoA. The protein is Phosphate acyltransferase of Chromobacterium violaceum (strain ATCC 12472 / DSM 30191 / JCM 1249 / CCUG 213 / NBRC 12614 / NCIMB 9131 / NCTC 9757 / MK).